The chain runs to 337 residues: Ornithine carbamoyltransferase (337 aa).

Carbamoyl phosphate-binding positions include serine 57 to threonine 60, glutamine 84, arginine 108, and histidine 135 to glutamine 138. Residues asparagine 167, aspartate 231, and serine 235–methionine 236 contribute to the L-ornithine site. Residues cysteine 272–leucine 273 and arginine 317 each bind carbamoyl phosphate.

Belongs to the aspartate/ornithine carbamoyltransferase superfamily. OTCase family.

The protein resides in the cytoplasm. It carries out the reaction carbamoyl phosphate + L-ornithine = L-citrulline + phosphate + H(+). It participates in amino-acid degradation; L-arginine degradation via ADI pathway; carbamoyl phosphate from L-arginine: step 2/2. Functionally, reversibly catalyzes the transfer of the carbamoyl group from carbamoyl phosphate (CP) to the N(epsilon) atom of ornithine (ORN) to produce L-citrulline. The sequence is that of Ornithine carbamoyltransferase from Streptococcus equi subsp. equi (strain 4047).